We begin with the raw amino-acid sequence, 484 residues long: Putative tyramine receptor 2 (484 aa).

The Extracellular segment spans residues 1–54; it reads MVRVELQAASLMNGSSAAEEPQDALVGGDACGGRRPPSVLGVRLAVPEWEVAVT. N-linked (GlcNAc...) asparagine glycosylation occurs at N13. Residues 55-77 form a helical membrane-spanning segment; it reads AVSLSLIILITIVGNVLVVLSVF. At 78–87 the chain is on the cytoplasmic side; sequence TYKPLRIVQN. A helical membrane pass occupies residues 88–109; sequence FFIVSLAVADLTVAVLVMPFNV. Topologically, residues 110–126 are extracellular; that stretch reads AYSLIQRWVFGIVVCKM. A disulfide bridge connects residues C124 and C203. A helical membrane pass occupies residues 127–147; it reads WLTCDVLCCTASILNLCAIAL. The Cytoplasmic segment spans residues 148–167; sequence DRYWAITDPINYAQKRTLRR. Residues 168-190 traverse the membrane as a helical segment; the sequence is VLAMIAGVWLLSGVISSPPLIGW. The Extracellular segment spans residues 191–215; the sequence is NDWPMEFNDTTPCQLTEEQGYVIYS. N198 carries an N-linked (GlcNAc...) asparagine glycan. A helical transmembrane segment spans residues 216–237; sequence SLGSFFIPLFIMTIVYVEIFIA. At 238-411 the chain is on the cytoplasmic side; sequence TKRRLRERAK…LSKERRAART (174 aa). Residues 253-280 show a composition bias toward polar residues; that stretch reads SAMKQQMAAQAVPSSVPSHDQESVSSET. Disordered regions lie at residues 253-322 and 350-383; these read SAMK…PAMV and TTTTTTTTTTTAVTDSPRSRTASQKGSTAPPTPV. The span at 295-306 shows a compositional bias: basic residues; that stretch reads EKRRKTKKKSKK. Over residues 350-360 the composition is skewed to low complexity; that stretch reads TTTTTTTTTTT. The span at 361 to 378 shows a compositional bias: polar residues; the sequence is AVTDSPRSRTASQKGSTA. The helical transmembrane segment at 412–433 threads the bilayer; sequence LGIIMGVFVVCWLPFFLMYVIV. Over 434–448 the chain is Extracellular; the sequence is PFCNPSCKPSPKLVN. A helical transmembrane segment spans residues 449-470; it reads FITWLGYINSALNPIIYTIFNL. The Cytoplasmic segment spans residues 471–484; that stretch reads DFRRAFKKLLHFKT.

Belongs to the G-protein coupled receptor 1 family.

The protein resides in the cell membrane. Functionally, G-protein coupled receptor for tyramine, a known neurotransmitter and neuromodulator and direct precursor of octopamine. The chain is Putative tyramine receptor 2 (GCR2) from Locusta migratoria (Migratory locust).